Consider the following 517-residue polypeptide: FERM domain-containing protein 5 (517 aa).

Positions 17–298 constitute an FERM domain; sequence YSCTVRLLDD…ENQAFYKLEK (282 aa). An interaction with ROCK1 region spans residues 308 to 353; sequence SNLFFKGSRFRYSGRVAKEVMESSAKIKREPPEIHRAGMVPSRSCP. The disordered stretch occupies residues 344 to 367; that stretch reads AGMVPSRSCPSITHGPRLSSVPRT. Ser-375 carries the post-translational modification Phosphoserine. 2 disordered regions span residues 385-408 and 485-517; these read DSAH…VRSS and GHGG…VPLD. A compositionally biased stretch (polar residues) spans 388–398; that stretch reads HSTPVRSSSHG. The segment covering 498–517 has biased composition (low complexity); the sequence is KGPQLQQQQWKGWGKSVPLD.

Interacts with CTNND1, ITGB5 (via cytoplasmic domain) and ROCK1.

The protein localises to the cell junction. It is found in the adherens junction. Functionally, may be involved in regulation of cell migration. May regulate cell-matrix interactions via its interaction with ITGB5 and modifying ITGB5 cytoplasmic tail interactions such as with FERMT2 and TLN1. May regulate ROCK1 kinase activity possibly involved in regulation of actin stress fiber formation. In Mus musculus (Mouse), this protein is FERM domain-containing protein 5 (Frmd5).